The chain runs to 494 residues: UPF0371 protein SPH_0451 (494 aa).

This sequence belongs to the UPF0371 family.

This chain is UPF0371 protein SPH_0451, found in Streptococcus pneumoniae (strain Hungary19A-6).